The chain runs to 239 residues: Pimeloyl-[acyl-carrier protein] methyl ester esterase (239 aa).

Residues W20, 77–78 (SM), and 138–142 (FISLQ) contribute to the substrate site. Catalysis depends on S77, which acts as the Nucleophile. Catalysis depends on residues D192 and H220. Position 220 (H220) interacts with substrate.

Belongs to the AB hydrolase superfamily. Carboxylesterase BioH family. Monomer.

Its subcellular location is the cytoplasm. The enzyme catalyses 6-carboxyhexanoyl-[ACP] methyl ester + H2O = 6-carboxyhexanoyl-[ACP] + methanol + H(+). It functions in the pathway cofactor biosynthesis; biotin biosynthesis. Its function is as follows. The physiological role of BioH is to remove the methyl group introduced by BioC when the pimeloyl moiety is complete. It allows to synthesize pimeloyl-ACP via the fatty acid synthetic pathway through the hydrolysis of the ester bonds of pimeloyl-ACP esters. In Legionella pneumophila (strain Corby), this protein is Pimeloyl-[acyl-carrier protein] methyl ester esterase.